Here is a 351-residue protein sequence, read N- to C-terminus: MAHTEILDTLQQGSKLSKPEMKRCMDAIMDGAIPDTAIATILTLLQKNGISADEIAGARESLIERATPITLDERAVDTCGTGGDSAGTFNISTAAALIANAAGVSIAKHGNRSVTSQCGSADVLEALGLPIELHPEATTALYRQTGFAFLYAPLYHPAMKKVAPVRKSLGIRTIFNILGPLLNPARVKRQLVGVFEPSLMELYAEALRQSGCSHALIVHGETESGLPLDEASVSGRTHIIELQNNVTCRHTTKPTDFHLQQWPIADLAGGTREENALLITRLLEGKATQAQREAALFAAAIACYVSGNANCIDEGICMAKEALAERRALRNLEAIIEISRDLERKYGTGKN.

Residues G80, 83-84 (GD), T88, 90-93 (NIST), 108-116 (KHGNRSVTS), and S120 each bind 5-phospho-alpha-D-ribose 1-diphosphate. Position 80 (G80) interacts with anthranilate. Position 92 (S92) interacts with Mg(2+). N111 contributes to the anthranilate binding site. R166 is a binding site for anthranilate. Residues D229 and E230 each contribute to the Mg(2+) site.

The protein belongs to the anthranilate phosphoribosyltransferase family. Homodimer. Mg(2+) serves as cofactor.

It catalyses the reaction N-(5-phospho-beta-D-ribosyl)anthranilate + diphosphate = 5-phospho-alpha-D-ribose 1-diphosphate + anthranilate. Its pathway is amino-acid biosynthesis; L-tryptophan biosynthesis; L-tryptophan from chorismate: step 2/5. In terms of biological role, catalyzes the transfer of the phosphoribosyl group of 5-phosphorylribose-1-pyrophosphate (PRPP) to anthranilate to yield N-(5'-phosphoribosyl)-anthranilate (PRA). This chain is Anthranilate phosphoribosyltransferase, found in Chlorobium phaeovibrioides (strain DSM 265 / 1930) (Prosthecochloris vibrioformis (strain DSM 265)).